A 227-amino-acid polypeptide reads, in one-letter code: Cytidylate kinase (227 aa).

Residue glycine 11–threonine 19 participates in ATP binding.

It belongs to the cytidylate kinase family. Type 1 subfamily.

Its subcellular location is the cytoplasm. The enzyme catalyses CMP + ATP = CDP + ADP. It carries out the reaction dCMP + ATP = dCDP + ADP. The sequence is that of Cytidylate kinase from Pasteurella multocida (strain Pm70).